Reading from the N-terminus, the 1225-residue chain is Mediator of RNA polymerase II transcription subunit 13 (1225 aa).

It belongs to the Mediator complex subunit 13 family. Component of the srb8-11 complex which consists of rb8, srb9(TRAP240), srb10 and srb11. The srb8-11 complex associates with the Mediator complex thereby blocking association with RNA polymerase II and leading to reduced transcriptional activation by Mediator.

The protein resides in the nucleus. Component of the srb8-11 complex. The srb8-11 complex is a regulatory module of the Mediator complex which is itself involved in regulation of basal and activated RNA polymerase II-dependent transcription. The srb8-11 complex may be involved in the transcriptional repression of a subset of genes regulated by Mediator. It may inhibit the association of the Mediator complex with RNA polymerase II to form the holoenzyme complex. This is Mediator of RNA polymerase II transcription subunit 13 (srb9) from Schizosaccharomyces pombe (strain 972 / ATCC 24843) (Fission yeast).